The primary structure comprises 84 residues: ATP synthase subunit c (84 aa).

Helical transmembrane passes span I9–I29 and I54–I74.

It belongs to the ATPase C chain family. F-type ATPases have 2 components, F(1) - the catalytic core - and F(0) - the membrane proton channel. F(1) has five subunits: alpha(3), beta(3), gamma(1), delta(1), epsilon(1). F(0) has three main subunits: a(1), b(2) and c(10-14). The alpha and beta chains form an alternating ring which encloses part of the gamma chain. F(1) is attached to F(0) by a central stalk formed by the gamma and epsilon chains, while a peripheral stalk is formed by the delta and b chains.

It localises to the cell inner membrane. Its function is as follows. F(1)F(0) ATP synthase produces ATP from ADP in the presence of a proton or sodium gradient. F-type ATPases consist of two structural domains, F(1) containing the extramembraneous catalytic core and F(0) containing the membrane proton channel, linked together by a central stalk and a peripheral stalk. During catalysis, ATP synthesis in the catalytic domain of F(1) is coupled via a rotary mechanism of the central stalk subunits to proton translocation. Key component of the F(0) channel; it plays a direct role in translocation across the membrane. A homomeric c-ring of between 10-14 subunits forms the central stalk rotor element with the F(1) delta and epsilon subunits. The sequence is that of ATP synthase subunit c from Pasteurella multocida (strain Pm70).